A 178-amino-acid polypeptide reads, in one-letter code: Large ribosomal subunit protein bL35m (178 aa).

This sequence belongs to the bacterial ribosomal protein bL35 family.

It localises to the mitochondrion. This Drosophila melanogaster (Fruit fly) protein is Large ribosomal subunit protein bL35m (mRpL35).